The primary structure comprises 417 residues: Serine hydroxymethyltransferase (417 aa).

Residues L121 and 125 to 127 (GHL) each bind (6S)-5,6,7,8-tetrahydrofolate. K229 carries the post-translational modification N6-(pyridoxal phosphate)lysine. 355-357 (SPF) provides a ligand contact to (6S)-5,6,7,8-tetrahydrofolate.

The protein belongs to the SHMT family. Homodimer. Requires pyridoxal 5'-phosphate as cofactor.

Its subcellular location is the cytoplasm. It catalyses the reaction (6R)-5,10-methylene-5,6,7,8-tetrahydrofolate + glycine + H2O = (6S)-5,6,7,8-tetrahydrofolate + L-serine. It functions in the pathway one-carbon metabolism; tetrahydrofolate interconversion. Its pathway is amino-acid biosynthesis; glycine biosynthesis; glycine from L-serine: step 1/1. Its function is as follows. Catalyzes the reversible interconversion of serine and glycine with tetrahydrofolate (THF) serving as the one-carbon carrier. This reaction serves as the major source of one-carbon groups required for the biosynthesis of purines, thymidylate, methionine, and other important biomolecules. Also exhibits THF-independent aldolase activity toward beta-hydroxyamino acids, producing glycine and aldehydes, via a retro-aldol mechanism. This Erwinia tasmaniensis (strain DSM 17950 / CFBP 7177 / CIP 109463 / NCPPB 4357 / Et1/99) protein is Serine hydroxymethyltransferase.